Consider the following 1440-residue polypeptide: Glucose transporter type 1 (1440 aa).

An N-terminal signal peptide occupies residues 1-23 (MAFLCAPGLTFFLTYSIFSAVLG). Residues 24–67 (MLQFGYNTGVINAPEKNIENFMKDVYKDRYGEDISEEFIQQLYS) lie on the Cytoplasmic side of the membrane. Residues 68–88 (VAVSIFAIGGMLGGFSGGWMA) traverse the membrane as a helical segment. Over 89-95 (NRFGRKG) the chain is Extracellular. The helical transmembrane segment at 96-116 (GLLLNNVLGIAGACLMGFTKV) threads the bilayer. Residues 117 to 127 (SHSYEMLFLGR) lie on the Cytoplasmic side of the membrane. The chain crosses the membrane as a helical span at residues 128-148 (FIIGVNCGLNTSLVPMYISEI). The Extracellular portion of the chain corresponds to 149–162 (APLNLRGGLGTVNQ). Glutamine 162 is a binding site for D-glucose. A helical transmembrane segment spans residues 163 to 183 (LAVTVGLLLSQVLGIEQILGT). At 184-186 (NEG) the chain is on the cytoplasmic side. A helical transmembrane segment spans residues 187-207 (WPILLGLAICPAILQLILLPV). The Extracellular segment spans residues 208-272 (CPESPRYLLI…LICSPTLRPP (65 aa)). Residues 273–293 (LIIGIVMQLSQQFSGINAVFY) traverse the membrane as a helical segment. Residues 283 to 284 (QQ) and asparagine 289 contribute to the D-glucose site. Residues 294 to 310 (YSTSLFMSSGLTEESAK) are Cytoplasmic-facing. A helical transmembrane segment spans residues 311-331 (FATIGIGAIMVVMTLVSIPLM). Residues 332–339 (DRTGRRTL) are Extracellular-facing. A helical membrane pass occupies residues 340–360 (HLYGLGGMFIFSIFITISFLI). Topologically, residues 361 to 372 (KEMIDWMSYLSV) are cytoplasmic. A helical membrane pass occupies residues 373–393 (VATLGFVVFFAVGPGSIPWMI). D-glucose is bound at residue tryptophan 391. Over 394 to 405 (TAELFSQGPRPS) the chain is Extracellular. Residues 406 to 426 (AMAIAVLVNWMANFVVGIGFP) traverse the membrane as a helical segment. The Cytoplasmic portion of the chain corresponds to 427 to 429 (SMK). Residues 430 to 450 (TALENYTFLPFSVFLAIFWIF) traverse the membrane as a helical segment. The Extracellular portion of the chain corresponds to 451 to 534 (TYKKVPETKN…GPYPLSDSTN (84 aa)). Asparagine 460 and asparagine 480 each carry an N-linked (GlcNAc...) asparagine glycan. A helical transmembrane segment spans residues 535–555 (LLGPGSSSYGPGGVLGLAGSG). Topologically, residues 556-1440 (SGLGGQCYTN…RKYTDFLRKK (885 aa)) are cytoplasmic. Disordered stretches follow at residues 628 to 708 (ERFL…SRYA), 725 to 808 (QANP…HSVM), 966 to 987 (APEG…SELP), 1000 to 1083 (FLAD…GSYH), 1304 to 1330 (LEGA…PLTH), and 1380 to 1401 (ANSP…GHHV). A compositionally biased stretch (polar residues) spans 669-678 (PPDSASVRST). Low complexity predominate over residues 686 to 704 (QPQQVHHQQQQVHHQQQHQ). Pro residues predominate over residues 730 to 739 (QAPPQQPAPP). Basic residues predominate over residues 754-789 (CQQRKHSHSPHHSRHTSPHSHHHHSHHSRHSRRSRR). Residues 1313–1330 (STTSEHSSSLPSPQPLTH) are compositionally biased toward low complexity.

The protein belongs to the major facilitator superfamily. Sugar transporter (TC 2.A.1.1) family. Glucose transporter subfamily.

Its subcellular location is the membrane. Functionally, facilitative glucose transporter. In Drosophila melanogaster (Fruit fly), this protein is Glucose transporter type 1 (Glut1).